Consider the following 78-residue polypeptide: MEKLTILLLLAAVLVLAQALIKKGGGEKRQKEKINFLSKRKTTAESWWEGECSGWSVYCTSDPECCSGECSSYYCELW.

The N-terminal stretch at 1-19 is a signal peptide; the sequence is MEKLTILLLLAAVLVLAQA. The propeptide occupies 20–38; sequence LIKKGGGEKRQKEKINFLS. Intrachain disulfides connect cysteine 52-cysteine 66, cysteine 59-cysteine 70, and cysteine 65-cysteine 75.

It belongs to the conotoxin O2 superfamily. Expressed by the venom duct.

The protein localises to the secreted. This chain is Conotoxin TsMEKL-P012, found in Conus tessulatus (Tessellate cone).